The following is a 343-amino-acid chain: Ribosomal RNA small subunit methyltransferase C (343 aa).

It belongs to the methyltransferase superfamily. RsmC family. In terms of assembly, monomer.

Its subcellular location is the cytoplasm. The catalysed reaction is guanosine(1207) in 16S rRNA + S-adenosyl-L-methionine = N(2)-methylguanosine(1207) in 16S rRNA + S-adenosyl-L-homocysteine + H(+). Specifically methylates the guanine in position 1207 of 16S rRNA in the 30S particle. The protein is Ribosomal RNA small subunit methyltransferase C of Escherichia coli (strain 55989 / EAEC).